The following is a 327-amino-acid chain: GMP reductase (327 aa).

C176 (thioimidate intermediate) is an active-site residue. 205–228 (IIADGGIRTHGDIAKSIRFGASMV) contributes to the NADP(+) binding site.

The protein belongs to the IMPDH/GMPR family. GuaC type 2 subfamily.

The enzyme catalyses IMP + NH4(+) + NADP(+) = GMP + NADPH + 2 H(+). In terms of biological role, catalyzes the irreversible NADPH-dependent deamination of GMP to IMP. It functions in the conversion of nucleobase, nucleoside and nucleotide derivatives of G to A nucleotides, and in maintaining the intracellular balance of A and G nucleotides. This Streptococcus agalactiae serotype Ia (strain ATCC 27591 / A909 / CDC SS700) protein is GMP reductase.